The sequence spans 63 residues: Cecropin (63 aa).

The first 23 residues, 1–23 (MNFYKIFVFIALILALSVSQSEA), serve as a signal peptide directing secretion. R62 is modified (arginine amide).

In terms of assembly, monomer. In terms of tissue distribution, hemolymph.

Its subcellular location is the secreted. Its function is as follows. Cecropins have lytic and antibacterial activity against several Gram-negative bacteria. In Glossina morsitans morsitans (Savannah tsetse fly), this protein is Cecropin.